The sequence spans 529 residues: ATP synthase F(1) complex catalytic subunit beta, mitochondrial (529 aa).

Residues 1 to 46 (MLSLVGRVASASASGALRGLNPLAALPQAHLLLRTAPAGVHPARDY) constitute a mitochondrion transit peptide. Ser106 carries an O-linked (GlcNAc) serine glycan. Lys124, Lys133, and Lys161 each carry N6-acetyllysine; alternate. N6-succinyllysine; alternate is present on residues Lys124, Lys133, and Lys161. Position 198 is an N6-acetyllysine (Lys198). Positions 209, 210, 211, 212, 213, and 214 each coordinate ADP. Residue Gly209 participates in ATP binding. Phosphate contacts are provided by Gly209, Val210, Gly211, Lys212, and Thr213. Residues Gly211, Lys212, Thr213, and Val214 each coordinate ATP. Thr213 is a binding site for Mg(2+). Glu238 is a Mg(2+) binding site. An ATP-binding site is contributed by Arg239. Lys259 and Lys264 each carry N6-acetyllysine; alternate. N6-succinyllysine; alternate occurs at positions 259 and 264. Thr312 carries the post-translational modification Phosphothreonine. A Phosphoserine modification is found at Ser415. The residue at position 426 (Lys426) is an N6-acetyllysine. Ser433 bears the Phosphoserine mark. 2 positions are modified to N6-acetyllysine: Lys480 and Lys485. N6-acetyllysine; alternate is present on Lys522. An N6-succinyllysine; alternate modification is found at Lys522. Ser529 carries the phosphoserine modification.

This sequence belongs to the ATPase alpha/beta chains family. In terms of assembly, homotrimer. Component of the ATP synthase complex composed at least of ATP5F1A/subunit alpha, ATP5F1B/subunit beta, ATP5MC1/subunit c (homooctomer), MT-ATP6/subunit a, MT-ATP8/subunit 8, ATP5ME/subunit e, ATP5MF/subunit f, ATP5MG/subunit g, ATP5MK/subunit k, ATP5MJ/subunit j, ATP5F1C/subunit gamma, ATP5F1D/subunit delta, ATP5F1E/subunit epsilon, ATP5PF/subunit F6, ATP5PB/subunit b, ATP5PD/subunit d, ATP5PO/subunit OSCP. ATP synthase complex consists of a soluble F(1) head domain (subunits alpha(3) and beta(3)) - the catalytic core - and a membrane F(0) domain - the membrane proton channel (subunits c, a, 8, e, f, g, k and j). These two domains are linked by a central stalk (subunits gamma, delta, and epsilon) rotating inside the F1 region and a stationary peripheral stalk (subunits F6, b, d, and OSCP). Interacts with PPIF. Interacts with BCL2L1 isoform BCL-X(L); the interaction mediates the association of BCL2L1 isoform BCL-X(L) with the mitochondrial membrane F(1)F(0) ATP synthase and enhances neurons metabolic efficiency. Interacts with CLN5 and PPT1. Interacts with S100A1; this interaction increases F1-ATPase activity. Interacts with MTLN. Interacts with TTC5/STRAP; the interaction results in decreased mitochondrial ATP production.

The protein resides in the mitochondrion inner membrane. The catalysed reaction is ATP + H2O + 4 H(+)(in) = ADP + phosphate + 5 H(+)(out). Its function is as follows. Catalytic subunit beta, of the soluble F(1) head domain within the mitochondrial ATP synthase complex (F(1)F(0) ATP synthase or complex V) that produces ATP from ADP and phosphate inorganique in the presence of a proton gradient across the membrane which is generated by electron transport complexes of the respiratory chain. With the non-catalytic subunit alpha (ATP5F1A), forms the catalytic core in the F(1) domain. ATP synthase complex consist of two structural domains, F(1) - containing the extramembraneous catalytic core, and F(0) - containing the membrane proton channel, linked together by a central stalk and a peripheral stalk. During catalysis, ATP synthesis in the catalytic domain of F(1) is coupled via a rotary mechanism of the central stalk subunits to proton translocation. Catalytic subunit beta, of the mitochondrial membrane ATP synthase complex (F(1)F(0) ATP synthase or Complex V) that produces ATP from ADP in the presence of a proton gradient across the membrane which is generated by electron transport complexes of the respiratory chain. ATP synthase complex consist of a soluble F(1) head domain - the catalytic core - and a membrane F(1) domain - the membrane proton channel. These two domains are linked by a central stalk rotating inside the F(1) region and a stationary peripheral stalk. During catalysis, ATP synthesis in the catalytic domain of F(1) is coupled via a rotary mechanism of the central stalk subunits to proton translocation. In vivo, can only synthesize ATP although its ATP hydrolase activity can be activated artificially in vitro. With the subunit alpha (ATP5F1A), forms the catalytic core in the F(1) domain. The protein is ATP synthase F(1) complex catalytic subunit beta, mitochondrial of Rattus norvegicus (Rat).